The chain runs to 556 residues: Aplysianin-A (556 aa).

A signal peptide spans 1-19; the sequence is MAVRFLALGLLIFVTSCSG. 6 N-linked (GlcNAc...) asparagine glycosylation sites follow: asparagine 150, asparagine 177, asparagine 374, asparagine 399, asparagine 414, and asparagine 430.

It to A.fulica achacin protein. In terms of assembly, homotetramer. In terms of tissue distribution, albumen gland.

Has antibacterial activity against Gram-negative and Gram-positive bacteria. This Aplysia kurodai (Kuroda's sea hare) protein is Aplysianin-A.